Consider the following 298-residue polypeptide: Deoxyuridine 5'-triphosphate nucleotidohydrolase (298 aa).

180–182 lines the substrate pocket; the sequence is RSG.

It belongs to the dUTPase family. It depends on Mg(2+) as a cofactor.

The enzyme catalyses dUTP + H2O = dUMP + diphosphate + H(+). Its function is as follows. Involved in nucleotide metabolism: produces dUMP, the immediate precursor of thymidine nucleotides and decreases the intracellular concentration of dUTP to avoid uracil incorporation into viral DNA. The chain is Deoxyuridine 5'-triphosphate nucleotidohydrolase from Alcelaphine herpesvirus 1 (strain C500) (AlHV-1).